We begin with the raw amino-acid sequence, 648 residues long: MDIPRIPQRPKRSKSSEENTPSSTPSSTPAPIVPARPRKNNGAAASSEGSGEFPPIPRRPQRKKNIGETDSEADEKPKDAESDEGWNDSEGKTPEKDIHAALKENADSDKPDIGDSEAEKQPEVDGKDPALNLEKALEANSEEAAIPSEDVTEDVTKSEETKSEDIEASVHIEEKVERESEVADTKGDIEVDDGIEVDDAKEVPISELSETDSAFKSEPTDDAANPVSEEAVKPTEPSEDAEDELVLDRESKTARESEPLEAEDVEEQHDQAMEKASSVTQIGETPSDAKISEDTSESNKGDEDVKENVLLEESGSEPKDSETGSPFQVEESAIVPSEGKPPAEVAETSQTTNKSAESLHSEENLTQAKPATVSDQQPTEKQEPSEQEIPKQESSKQPSKPIVPTRPNKSVPSVPKRPVRSVPASSSPESVQESDAKKAPPPKPKKLSSKIAAFQQMFNQPEAVPTAPQHPKSGKLSSEKIGFAANLQNVMGRGIALPGMANPQMFQRASTDLEEETADVHAEPEQNPQVSKAPQRARGPRGKRLPKAIKETTVKVEPRFQLRVASLWQVEFNKPKETEKVDDDLEEDYEVEPEFVDSVREPESDKETVAEPETSTKDDSVQTESLSNEESTSELPEAITTEHVLDSP.

3 disordered regions span residues 1 to 479 (MDIP…LSSE), 511 to 550 (TDLEEETADVHAEPEQNPQVSKAPQRARGPRGKRLPKAIK), and 571 to 648 (EFNK…LDSP). Over residues 18–29 (ENTPSSTPSSTP) the composition is skewed to low complexity. 4 stretches are compositionally biased toward basic and acidic residues: residues 89-128 (SEGKTPEKDIHAALKENADSDKPDIGDSEAEKQPEVDGKD), 154-189 (DVTKSEETKSEDIEASVHIEEKVERESEVADTKGDI), 246-258 (VLDRESKTARESE), and 290-309 (KISEDTSESNKGDEDVKENV). Composition is skewed to polar residues over residues 347 to 356 (ETSQTTNKSA) and 364 to 377 (NLTQAKPATVSDQQ). The segment covering 378–394 (PTEKQEPSEQEIPKQES) has biased composition (basic and acidic residues). The segment covering 409 to 433 (KSVPSVPKRPVRSVPASSSPESVQE) has biased composition (low complexity). Over residues 538–547 (RGPRGKRLPK) the composition is skewed to basic residues. The span at 580-595 (KVDDDLEEDYEVEPEF) shows a compositional bias: acidic residues. Positions 597–620 (DSVREPESDKETVAEPETSTKDDS) are enriched in basic and acidic residues. The segment covering 623 to 635 (TESLSNEESTSEL) has biased composition (low complexity).

It belongs to the AIM21 family.

The protein resides in the cytoplasm. Its subcellular location is the cytoskeleton. The protein localises to the actin patch. Involved in mitochondrial migration along actin filaments. This chain is Altered inheritance of mitochondria protein 21 (AIM21), found in Clavispora lusitaniae (strain ATCC 42720) (Yeast).